Reading from the N-terminus, the 183-residue chain is Ribosome maturation factor RimM (183 aa).

Positions Glu103–Phe183 constitute a PRC barrel domain.

This sequence belongs to the RimM family. In terms of assembly, binds ribosomal protein uS19.

The protein resides in the cytoplasm. Functionally, an accessory protein needed during the final step in the assembly of 30S ribosomal subunit, possibly for assembly of the head region. Essential for efficient processing of 16S rRNA. May be needed both before and after RbfA during the maturation of 16S rRNA. It has affinity for free ribosomal 30S subunits but not for 70S ribosomes. The chain is Ribosome maturation factor RimM from Escherichia coli O157:H7 (strain EC4115 / EHEC).